Consider the following 353-residue polypeptide: Chorismate synthase (353 aa).

2 residues coordinate NADP(+): Arg48 and Arg54. FMN is bound by residues 125–127 (RSS), 238–239 (NA), Gly278, 293–297 (KPTSS), and Arg319.

This sequence belongs to the chorismate synthase family. Homotetramer. FMNH2 is required as a cofactor.

It carries out the reaction 5-O-(1-carboxyvinyl)-3-phosphoshikimate = chorismate + phosphate. It functions in the pathway metabolic intermediate biosynthesis; chorismate biosynthesis; chorismate from D-erythrose 4-phosphate and phosphoenolpyruvate: step 7/7. In terms of biological role, catalyzes the anti-1,4-elimination of the C-3 phosphate and the C-6 proR hydrogen from 5-enolpyruvylshikimate-3-phosphate (EPSP) to yield chorismate, which is the branch point compound that serves as the starting substrate for the three terminal pathways of aromatic amino acid biosynthesis. This reaction introduces a second double bond into the aromatic ring system. The protein is Chorismate synthase of Bordetella pertussis (strain Tohama I / ATCC BAA-589 / NCTC 13251).